Reading from the N-terminus, the 147-residue chain is uncharacterized protein (147 aa).

Low complexity predominate over residues 72–81 (ARAKPASRAP). Residues 72 to 147 (ARAKPASRAP…QGAAGRRLSP (76 aa)) form a disordered region.

This is an uncharacterized protein from Homo sapiens (Human).